Consider the following 383-residue polypeptide: UDP-N-acetylglucosamine 2-epimerase (383 aa).

Belongs to the UDP-N-acetylglucosamine 2-epimerase family.

It catalyses the reaction UDP-N-acetyl-alpha-D-glucosamine = UDP-N-acetyl-alpha-D-mannosamine. It participates in capsule biogenesis; capsule polysaccharide biosynthesis. Its function is as follows. Non-hydrolyzing C2-epimerase involved in the biosynthesis of capsular polysaccharides. Catalyzes the C2 epimerization of UDP-N-acetylglucosamine (UDP-GlcNAc) to form UDP-N-acetylmannosamine (UDP-ManNAc). The chain is UDP-N-acetylglucosamine 2-epimerase from Campylobacter jejuni.